A 367-amino-acid chain; its full sequence is Phosphoribosylaminoimidazole-succinocarboxamide synthase (367 aa).

This sequence belongs to the SAICAR synthetase family.

It carries out the reaction 5-amino-1-(5-phospho-D-ribosyl)imidazole-4-carboxylate + L-aspartate + ATP = (2S)-2-[5-amino-1-(5-phospho-beta-D-ribosyl)imidazole-4-carboxamido]succinate + ADP + phosphate + 2 H(+). The protein operates within purine metabolism; IMP biosynthesis via de novo pathway; 5-amino-1-(5-phospho-D-ribosyl)imidazole-4-carboxamide from 5-amino-1-(5-phospho-D-ribosyl)imidazole-4-carboxylate: step 1/2. In Saccharophagus degradans (strain 2-40 / ATCC 43961 / DSM 17024), this protein is Phosphoribosylaminoimidazole-succinocarboxamide synthase.